The chain runs to 224 residues: Phosphoribosyltransferase domain-containing protein 1 (224 aa).

Glutamate 140 and aspartate 141 together coordinate Mg(2+). Residues 140 to 148 (EDIINTGRT), lysine 172, 193 to 194 (FV), and aspartate 200 contribute to the GMP site. A Mg(2+)-binding site is contributed by aspartate 200.

It belongs to the purine/pyrimidine phosphoribosyltransferase family.

This Xenopus laevis (African clawed frog) protein is Phosphoribosyltransferase domain-containing protein 1 (prtfdc1).